We begin with the raw amino-acid sequence, 501 residues long: Vitamin D 25-hydroxylase (501 aa).

A substrate-binding site is contributed by alanine 250. Cysteine 448 lines the heme pocket.

This sequence belongs to the cytochrome P450 family. As to quaternary structure, homodimer. Requires heme as cofactor. In terms of tissue distribution, highly expressed in the liver and testis.

The protein localises to the endoplasmic reticulum membrane. It is found in the microsome membrane. It carries out the reaction calciol + reduced [NADPH--hemoprotein reductase] + O2 = calcidiol + oxidized [NADPH--hemoprotein reductase] + H2O + H(+). It catalyses the reaction vitamin D2 + reduced [NADPH--hemoprotein reductase] + O2 = 25-hydroxyvitamin D2 + oxidized [NADPH--hemoprotein reductase] + H2O + H(+). The enzyme catalyses 1alpha-hydroxyvitamin D2 + reduced [NADPH--hemoprotein reductase] + O2 = 1alpha,25-dihydroxyvitamin D2 + oxidized [NADPH--hemoprotein reductase] + H2O + H(+). The catalysed reaction is alfacalcidol + reduced [NADPH--hemoprotein reductase] + O2 = calcitriol + oxidized [NADPH--hemoprotein reductase] + H2O + H(+). The protein operates within hormone biosynthesis; vitamin D biosynthesis. A cytochrome P450 monooxygenase involved in activation of vitamin D precursors. Catalyzes hydroxylation at C-25 of both forms of vitamin D, vitamin D(2) and D(3) (calciol). Can metabolize vitamin D analogs/prodrugs 1alpha-hydroxyvitamin D(2) (doxercalciferol) and 1alpha-hydroxyvitamin D(3) (alfacalcidol) forming 25-hydroxy derivatives. Mechanistically, uses molecular oxygen inserting one oxygen atom into a substrate, and reducing the second into a water molecule, with two electrons provided by NADPH via cytochrome P450 reductase (CPR; NADPH-ferrihemoprotein reductase). The protein is Vitamin D 25-hydroxylase (Cyp2r1) of Mus musculus (Mouse).